The following is a 156-amino-acid chain: Small ribosomal subunit protein uS7 (156 aa).

It belongs to the universal ribosomal protein uS7 family. As to quaternary structure, part of the 30S ribosomal subunit. Contacts proteins S9 and S11.

One of the primary rRNA binding proteins, it binds directly to 16S rRNA where it nucleates assembly of the head domain of the 30S subunit. Is located at the subunit interface close to the decoding center, probably blocks exit of the E-site tRNA. This chain is Small ribosomal subunit protein uS7, found in Corynebacterium jeikeium (strain K411).